Here is a 493-residue protein sequence, read N- to C-terminus: D-glyceraldehyde dehydrogenase (NADP(+)) (493 aa).

A coiled-coil region spans residues 70–92; the sequence is RAKELIEKNRAELENIIMEENGK. NADP(+)-binding positions include 146-149, R157, 172-176, 204-210, 225-248, C281, and 381-383; these read TPWN, KPSSD, RGSEIGD, GSTA…ILEL, and EIF. Substrate contacts are provided by N149 and R157. Residue E247 is the Proton acceptor of the active site. C281 is a binding site for substrate. The active-site Proton donor is C281.

It belongs to the aldehyde dehydrogenase family. Glyceraldehyde dehydrogenase subfamily. In terms of assembly, homotetramer. Dimer of dimers.

The catalysed reaction is D-glyceraldehyde + NADP(+) + H2O = (R)-glycerate + NADPH + 2 H(+). Its pathway is carbohydrate degradation; glycolysis. With respect to regulation, inhibited by calcium, cadmium, copper and mercury ions. Stable for 2 hours at 60 degrees Celsius but activity is decreased to less than 50 percent within 20 minutes at 80 degrees Celsius. Two folds activity enhancement in the presence of 1 mM glutathione, DTT, or 2-mercaptoethanol. Complete activity inhibition by thiol-modifying reagents such as p-chloromercuribenzoic acid or p-hydroxy-mercuribenzoic acid. In terms of biological role, NADP-dependent dehydrogenase of the nED (non-phosphorylated Entner-Doudoroff) pathway with highest activity towards glyceraldehydes (e.g. D,L-glyceraldehyde and D-glyceraldehyde), to a lesser extent towards D,L-glyceraldehyde-3-phosphate and glycolaldehyde, but no activity towards aliphatic or aromatic aldehydes. This is D-glyceraldehyde dehydrogenase (NADP(+)) from Thermoplasma acidophilum (strain ATCC 25905 / DSM 1728 / JCM 9062 / NBRC 15155 / AMRC-C165).